The following is a 127-amino-acid chain: Aspartate 1-decarboxylase (127 aa).

The Schiff-base intermediate with substrate; via pyruvic acid role is filled by Ser-25. Ser-25 carries the pyruvic acid (Ser) modification. Thr-57 serves as a coordination point for substrate. Tyr-58 serves as the catalytic Proton donor. 73–75 (GSA) provides a ligand contact to substrate.

It belongs to the PanD family. Heterooctamer of four alpha and four beta subunits. Requires pyruvate as cofactor. Post-translationally, is synthesized initially as an inactive proenzyme, which is activated by self-cleavage at a specific serine bond to produce a beta-subunit with a hydroxyl group at its C-terminus and an alpha-subunit with a pyruvoyl group at its N-terminus.

It is found in the cytoplasm. The enzyme catalyses L-aspartate + H(+) = beta-alanine + CO2. It participates in cofactor biosynthesis; (R)-pantothenate biosynthesis; beta-alanine from L-aspartate: step 1/1. Functionally, catalyzes the pyruvoyl-dependent decarboxylation of aspartate to produce beta-alanine. This Dechloromonas aromatica (strain RCB) protein is Aspartate 1-decarboxylase.